Here is an 87-residue protein sequence, read N- to C-terminus: MAHKKGGGSTRNGRDSASKRLGIKKFGGEHVLAGNILVRQRGTQHNPGKNVGLGKDHTLYALLEGTVLFKKGTKGKSYVSVEPAKDN.

The tract at residues 1–21 is disordered; that stretch reads MAHKKGGGSTRNGRDSASKRL.

This sequence belongs to the bacterial ribosomal protein bL27 family.

The chain is Large ribosomal subunit protein bL27 from Amoebophilus asiaticus (strain 5a2).